A 302-amino-acid polypeptide reads, in one-letter code: Quinolinate synthase (302 aa).

Residues His24 and Ser41 each coordinate iminosuccinate. Cys86 provides a ligand contact to [4Fe-4S] cluster. Residues 112-114 (YVN) and Ser129 each bind iminosuccinate. Cys171 provides a ligand contact to [4Fe-4S] cluster. Iminosuccinate is bound by residues 197 to 199 (HPE) and Thr214. [4Fe-4S] cluster is bound at residue Cys259.

This sequence belongs to the quinolinate synthase family. Type 2 subfamily. [4Fe-4S] cluster is required as a cofactor.

It localises to the cytoplasm. It catalyses the reaction iminosuccinate + dihydroxyacetone phosphate = quinolinate + phosphate + 2 H2O + H(+). Its pathway is cofactor biosynthesis; NAD(+) biosynthesis; quinolinate from iminoaspartate: step 1/1. Functionally, catalyzes the condensation of iminoaspartate with dihydroxyacetone phosphate to form quinolinate. This chain is Quinolinate synthase, found in Dehalococcoides mccartyi (strain ATCC BAA-2266 / KCTC 15142 / 195) (Dehalococcoides ethenogenes (strain 195)).